The chain runs to 156 residues: Small ribosomal subunit protein uS7 (156 aa).

Belongs to the universal ribosomal protein uS7 family. In terms of assembly, part of the 30S ribosomal subunit. Contacts proteins S9 and S11.

Functionally, one of the primary rRNA binding proteins, it binds directly to 16S rRNA where it nucleates assembly of the head domain of the 30S subunit. Is located at the subunit interface close to the decoding center, probably blocks exit of the E-site tRNA. The polypeptide is Small ribosomal subunit protein uS7 (Rubrobacter xylanophilus (strain DSM 9941 / JCM 11954 / NBRC 16129 / PRD-1)).